The chain runs to 87 residues: Large ribosomal subunit protein bL27 (87 aa).

A disordered region spans residues 1–26 (MAHKKGTGSTRNGRDSNSKRLGVKAY).

Belongs to the bacterial ribosomal protein bL27 family.

The polypeptide is Large ribosomal subunit protein bL27 (Prochlorococcus marinus (strain SARG / CCMP1375 / SS120)).